The following is a 169-amino-acid chain: Cell division inhibitor SulA (169 aa).

The interval 106-112 (ALRTGNY) is ftsZ binding. The lon protease binding stretch occupies residues 162–169 (KIHSNLYH).

It belongs to the SulA family. As to quaternary structure, interacts with FtsZ. Post-translationally, is rapidly cleaved and degraded by the Lon protease once DNA damage is repaired.

In terms of biological role, component of the SOS system and an inhibitor of cell division. Accumulation of SulA causes rapid cessation of cell division and the appearance of long, non-septate filaments. In the presence of GTP, binds a polymerization-competent form of FtsZ in a 1:1 ratio, thus inhibiting FtsZ polymerization and therefore preventing it from participating in the assembly of the Z ring. This mechanism prevents the premature segregation of damaged DNA to daughter cells during cell division. This Salmonella dublin (strain CT_02021853) protein is Cell division inhibitor SulA.